The following is an 867-amino-acid chain: MENEKENLFCEPHKRGLMKTPLKESTTANIVLAEIQPDFGPLTTPTKPKEGSQGEPWTPTANLKMLISAVSPEIRNRDQKRGLFDNRSGLPEAKDCIHEHLSGDEFEKSQPSRKEKSLGLLCHKFLARYPNYPNPAVNNDICLDEVAEELNVERRRIYDIVNVLESLHMVSRLAKNRYTWHGRHNLNKTLGTLKSIGEENKYAEQIMMIKKKEYEQEFDFIKSYSIEDHIIKSNTGPNGHPDMCFVELPGVEFRAASVNSRKDKSLRVMSQKFVMLFLVSTPQIVSLEVAAKILIGEDHVEDLDKSKFKTKIRRLYDIANVLSSLDLIKKVHVTEERGRKPAFKWTGPEISPNTSGSSPVIHFTPSDLEVRRSSKENCAKNLFSTRGKPNFTRHPSLIKLVKSIESDRRKINSAPSSPIKTNKAESSQNSAPFPSKMAQLAAICKMQLEEQSSESRQKVKVQLARSGPCKPVAPLDPPVNAEMELTAPSLIQPLGMVPLIPSPLSSAVPLILPQAPSGPSYAIYLQPTQAHQSVTPPQGLSPTVCTTHSSKATGSKDSTDATTEKAANDTSKASASTRPGSLLPAPERQGAKSRTREPAGERGSKRASMLEDSGSKKKFKEDLKGLENVSATLFPSGYLIPLTQCSSLGAESILSGKENSSALSPNHRIYSSPIAGVIPVTSSELTAVNFPSFHVTPLKLMVSPTSVAAVPVGNSPALASSHPVPIQNPSSAIVNFTLQHLGLISPNVQLSASPGSGIVPVSPRIESVNVAPENAGTQQGRATNYDSPVPGQSQPNGQSVAVTGAQQPVPVTPKGSQLVAESFFRTPGGPTKPTSSSCMDFEGANKTSLGTLFVPQRKLEVSTEDVH.

The tract at residues 38–58 is disordered; sequence DFGPLTTPTKPKEGSQGEPWT. A phosphoserine mark is found at serine 71 and serine 102. 2 consecutive DNA-binding regions follow at residues 113–182 and 261–347; these read RKEK…TWHG and RKDK…KWTG. Disordered regions lie at residues 408–432, 532–616, and 771–800; these read RRKI…NSAP, QSVT…SGSK, and APEN…GQSV. Serine 413 and serine 417 each carry phosphoserine. Composition is skewed to polar residues over residues 413-432 and 532-556; these read SAPS…NSAP and QSVT…TGSK. Positions 557-567 are enriched in basic and acidic residues; that stretch reads DSTDATTEKAA. A compositionally biased stretch (polar residues) spans 568 to 579; the sequence is NDTSKASASTRP. The segment covering 594–604 has biased composition (basic and acidic residues); the sequence is RTREPAGERGS. Positions 775 to 800 are enriched in polar residues; that stretch reads AGTQQGRATNYDSPVPGQSQPNGQSV.

This sequence belongs to the E2F/DP family. Homodimer and heterodimer: mainly forms homodimers and, to a lesser extent, heterodimers with E2F8. Dimerization is important for DNA-binding. Interacts with HIF1A.

It localises to the nucleus. Its function is as follows. Atypical E2F transcription factor that participates in various processes such as angiogenesis and polyploidization of specialized cells. Mainly acts as a transcription repressor that binds DNA independently of DP proteins and specifically recognizes the E2 recognition site 5'-TTTC[CG]CGC-3'. Directly represses transcription of classical E2F transcription factors such as E2F1: component of a feedback loop in S phase by repressing the expression of E2F1, thereby preventing p53/TP53-dependent apoptosis. Plays a key role in polyploidization of cells in placenta and liver by regulating the endocycle, probably by repressing genes promoting cytokinesis and antagonizing action of classical E2F proteins (E2F1, E2F2 and/or E2F3). Required for placental development by promoting polyploidization of trophoblast giant cells. Acts as a promoter of sprouting angiogenesis, possibly by acting as a transcription activator: associates with HIF1A, recognizes and binds the VEGFA promoter, which is different from canonical E2 recognition site, and activates expression of the VEGFA gene. The protein is Transcription factor E2F8 (E2F8) of Homo sapiens (Human).